We begin with the raw amino-acid sequence, 453 residues long: Probable exopolygalacturonase B (453 aa).

An N-terminal signal peptide occupies residues 1-16; that stretch reads MKFFALAALFASTVNS. Residues Asn-185 and Asn-225 are each glycosylated (N-linked (GlcNAc...) asparagine). Asp-255 acts as the Proton donor in catalysis. Cysteines 257 and 274 form a disulfide. N-linked (GlcNAc...) asparagine glycans are attached at residues Asn-263 and Asn-275. His-278 is an active-site residue. 2 PbH1 repeats span residues 295–316 and 327–348; these read IENV…RLKA and INNV…VLDQ. N-linked (GlcNAc...) asparagine glycosylation is found at Asn-302, Asn-329, Asn-354, and Asn-366. A PbH1 3 repeat occupies 362-405; the sequence is PSRVNFTNIVFEDIYGTSSGKRGKVVADLTCSPNAVCSGIRLKN. Cys-392 and Cys-398 form a disulfide bridge. An N-linked (GlcNAc...) asparagine glycan is attached at Asn-436.

It belongs to the glycosyl hydrolase 28 family.

The protein localises to the secreted. It carries out the reaction [(1-&gt;4)-alpha-D-galacturonosyl](n) + H2O = alpha-D-galacturonate + [(1-&gt;4)-alpha-D-galacturonosyl](n-1). Specific in hydrolyzing the terminal glycosidic bond of polygalacturonic acid and oligogalacturonates. This is Probable exopolygalacturonase B (pgxB) from Aspergillus fumigatus (strain CBS 144.89 / FGSC A1163 / CEA10) (Neosartorya fumigata).